Here is a 544-residue protein sequence, read N- to C-terminus: Shootin-1 (544 aa).

Coiled-coil stretches lie at residues 17-100 (SNQV…LKRK), 141-184 (IVIT…EKHD), and 259-349 (EALQ…QVSN). A disordered region spans residues 343–544 (KLQQVSNPPT…TTTICTEQLS (202 aa)). Residues 352–371 (TAAPAPPPPPPPPPPPPPPS) show a composition bias toward pro residues. Residues 372 to 383 (SSSSNPLSSLLS) show a composition bias toward low complexity. The segment covering 397–412 (LVEKDSSEKSPEKDVR) has biased composition (basic and acidic residues). A compositionally biased stretch (pro residues) spans 469–479 (SSSPGPRPPSP). Positions 480–504 (SEKSELEKALQRRREAVKSAKNNTN) form a coiled coil. The span at 481–497 (EKSELEKALQRRREAVK) shows a compositional bias: basic and acidic residues. The span at 499-544 (AKNNTNPSSVVDLTQIKQTRSEPGQNTGDQETLRHTTTTICTEQLS) shows a compositional bias: polar residues.

It belongs to the shootin family.

It is found in the perikaryon. The protein resides in the cell projection. The protein localises to the axon. It localises to the growth cone. Its subcellular location is the cytoplasm. It is found in the cytoskeleton. The protein resides in the filopodium. The protein localises to the lamellipodium. Its function is as follows. Involved in the generation of internal asymmetric signals required for neuronal polarization and neurite outgrowth. The sequence is that of Shootin-1 from Danio rerio (Zebrafish).